The following is a 138-amino-acid chain: Prefoldin subunit alpha (138 aa).

This sequence belongs to the prefoldin subunit alpha family. Heterohexamer of two alpha and four beta subunits.

It is found in the cytoplasm. In terms of biological role, molecular chaperone capable of stabilizing a range of proteins. Seems to fulfill an ATP-independent, HSP70-like function in archaeal de novo protein folding. The sequence is that of Prefoldin subunit alpha from Methanococcoides burtonii (strain DSM 6242 / NBRC 107633 / OCM 468 / ACE-M).